A 170-amino-acid polypeptide reads, in one-letter code: Tubulin polymerization-promoting protein family member 2 (170 aa).

Residues 127-147 are disordered; it reads TGTHKERFDESGKGKGIAGRE. A compositionally biased stretch (basic and acidic residues) spans 129–139; it reads THKERFDESGK.

The protein belongs to the TPPP family.

It localises to the cytoplasm. The protein resides in the cytosol. It is found in the cell projection. Its subcellular location is the cilium. The protein localises to the flagellum. Functionally, probable regulator of microtubule dynamics required for sperm motility. In contrast to other members of the family, has no microtubule bundling activity. The polypeptide is Tubulin polymerization-promoting protein family member 2 (TPPP2) (Macaca fascicularis (Crab-eating macaque)).